Reading from the N-terminus, the 409-residue chain is Microfibrillar-associated protein 3-like (409 aa).

An N-terminal signal peptide occupies residues 1–28 (MGLQKSHLTVCLPPSVPFLILVSTLATA). Topologically, residues 29–148 (KSVTNSTLNG…TLRVIFTSGD (120 aa)) are extracellular. N-linked (GlcNAc...) asparagine glycosylation is found at Asn33, Asn37, Asn67, Asn111, and Asn135. An Ig-like C2-type domain is found at 47–141 (PVIIARTDHI…GTINNTVTLR (95 aa)). A disulfide bridge links Cys68 with Cys125. A helical membrane pass occupies residues 149 to 169 (MGVYYMVVCLVAFTIVMILNI). At 170–409 (TRLCMMSSHL…NTCIIYESHV (240 aa)) the chain is on the cytoplasmic side. Phosphotyrosine is present on Tyr287. Phosphoserine occurs at positions 298, 303, 306, and 307. Residues 319–395 (VSVHPQSKRD…AHLETTEPAV (77 aa)) form a disordered region. Basic and acidic residues predominate over residues 325 to 340 (SKRDHVDDQEGGHFEV). The span at 356 to 373 (TAEPSTDITTTELTSEET) shows a compositional bias: low complexity.

The protein localises to the cell membrane. The protein resides in the nucleus. Its subcellular location is the cytoplasm. Functionally, may participate in the nuclear signaling of EGFR and MAPK1/ERK2. In Mus musculus (Mouse), this protein is Microfibrillar-associated protein 3-like (Mfap3l).